The chain runs to 169 residues: Zinc metalloproteinase-disintegrin-like mikarin (169 aa).

The region spanning 14 to 57 is the Peptidase M12B domain; that stretch reads KYLEYVVVDNNMYRNYGNAGPCVMSAEISFEPLQEFSSCDIQEP. Residues 65 to 129 form the Disintegrin domain; the sequence is PAVCGNYYVE…PEICTGRSAK (65 aa). 6 disulfide bridges follow: Cys68–Cys97, Cys79–Cys92, Cys81–Cys87, Cys105–Cys111, Cys110–Cys123, and Cys150–Cys161. A D/ECD-tripeptide motif is present at residues 116-118; it reads DCD.

The protein belongs to the venom metalloproteinase (M12B) family. P-III subfamily. P-IIIa sub-subfamily. As to quaternary structure, monomer. The cofactor is Zn(2+). Expressed by the venom gland.

The protein resides in the secreted. With respect to regulation, inhibited by EDTA, but not by PMSF. Its function is as follows. Snake venom zinc metalloproteinase that calcium-independently catalyzes the conversion of prothrombin (F2) to alpha-thrombin through the formation of a thrombin intermediate. In Micropechis ikaheca (New Guinean small-eyed snake), this protein is Zinc metalloproteinase-disintegrin-like mikarin.